The sequence spans 710 residues: Mitochondrial intermediate peptidase (710 aa).

Residues 1–33 constitute a mitochondrion transit peptide; it reads MLLAAGTRYAYRLCGRRAAAALQGRAGRSCARS. The residue at position 124 (lysine 124) is an N6-acetyllysine. Residue histidine 492 participates in Zn(2+) binding. Glutamate 493 is a catalytic residue. Positions 496 and 499 each coordinate Zn(2+).

Belongs to the peptidase M3 family. In terms of assembly, monomer. Zn(2+) is required as a cofactor.

It is found in the mitochondrion matrix. The enzyme catalyses Release of an N-terminal octapeptide as second stage of processing of some proteins imported into the mitochondrion.. Its activity is regulated as follows. Activity is divalent cation-dependent. It is stimulated by manganese, magnesium or calcium ions and reversibly inhibited by zinc, cobalt and iron. In terms of biological role, cleaves proteins, imported into the mitochondrion, to their mature size. The polypeptide is Mitochondrial intermediate peptidase (Mipep) (Rattus norvegicus (Rat)).